Reading from the N-terminus, the 853-residue chain is DNA mismatch repair protein MutS (853 aa).

616-623 (GPNMGGKS) contacts ATP.

Belongs to the DNA mismatch repair MutS family.

Its function is as follows. This protein is involved in the repair of mismatches in DNA. It is possible that it carries out the mismatch recognition step. This protein has a weak ATPase activity. This is DNA mismatch repair protein MutS from Erwinia tasmaniensis (strain DSM 17950 / CFBP 7177 / CIP 109463 / NCPPB 4357 / Et1/99).